A 523-amino-acid polypeptide reads, in one-letter code: Cytochrome P450 monooxygenase bsc5 (523 aa).

Residues 16–36 (MQLHWTVLGLLPVLFIAILGP) traverse the membrane as a helical segment. N-linked (GlcNAc...) asparagine glycans are attached at residues Asn178, Asn281, and Asn403. Cys459 serves as a coordination point for heme.

The protein belongs to the cytochrome P450 family. Requires heme as cofactor.

It localises to the membrane. The protein operates within mycotoxin biosynthesis. In terms of biological role, cytochrome P450 monooxygenase; part of the gene cluster that mediates the biosynthesis of the diterpene glucoside brassicicene C. In the first step of the brassicicene C biosynthesis, the bifunctional diterpene synthase bsc8 that possesses both prenyl transferase and terpene cyclase activity, converts isopentenyl diphosphate and dimethylallyl diphosphate into geranylgeranyl diphosphate (GGDP) that is further converted into fusicocca-2,10(14)-diene, the first precursor for brassicicene C. Fusicocca-2,10(14)-diene is then substrate of cytochrome P450 monooxygenase bsc1 for hydroxylation at the C-8 position. Oxidation at C-16 position to aldehyde is then catalyzed by the cytochrome P450 monooyxygenase bsc7, yielding fusicocca-2,10(14)-diene-8-beta,16-diol. Follows the isomerization of the double bond and reduction of aldehyde to alcohol catalyzed by the short-chain dehydrogenase/reductase bsc3 to yield the diol compound fusicocca-1,10(14)-diene-8 beta,16-diol. The next step is the oxidation at the C-3 position of fusicocca-2,10(14)-diene-8-beta,16-diol catalyzed by the alpha-ketoglutarate dependent dioxygenase bsc9, to produce a triol compound. Methylation of the hydroxy group at position 16 is performed by the methyltransferase bsc6. 16-O-methylation is followed by oxidation at the C-13 position to ketone and an alkyl shift of the methyl group leads to brassicicene C. Although the probable acetyltransferase bsc4 is included in the gene cluster, no acetylation reactions are necessary for brassicicene C biosynthesis. However, the fact that brassicicene E, which is a structurally related compound having an acetoxy group at position 12, was previously isolated from another strain of A.brassicicola suggests that the ATCC 96836 strain might also produce a small amount of brassicicene E. This chain is Cytochrome P450 monooxygenase bsc5, found in Alternaria brassicicola (Dark leaf spot agent).